A 553-amino-acid polypeptide reads, in one-letter code: Chaperonin GroEL 1 (553 aa).

ATP is bound by residues 29–32, 86–90, G413, 476–478, and D492; these read TIGP, DGTTT, and NAL. Positions 520–543 are disordered; the sequence is DKPEPPAPAGGGGDPMGGMGGMDP. Residues 528 to 543 show a composition bias toward gly residues; it reads AGGGGDPMGGMGGMDP.

Belongs to the chaperonin (HSP60) family. In terms of assembly, forms a cylinder of 14 subunits composed of two heptameric rings stacked back-to-back. Interacts with the co-chaperonin GroES.

The protein resides in the cytoplasm. The catalysed reaction is ATP + H2O + a folded polypeptide = ADP + phosphate + an unfolded polypeptide.. Together with its co-chaperonin GroES, plays an essential role in assisting protein folding. The GroEL-GroES system forms a nano-cage that allows encapsulation of the non-native substrate proteins and provides a physical environment optimized to promote and accelerate protein folding. The polypeptide is Chaperonin GroEL 1 (Synechococcus sp. (strain CC9311)).